A 473-amino-acid polypeptide reads, in one-letter code: Aspartyl/glutamyl-tRNA(Asn/Gln) amidotransferase subunit B (473 aa).

This sequence belongs to the GatB/GatE family. GatB subfamily. Heterotrimer of A, B and C subunits.

The catalysed reaction is L-glutamyl-tRNA(Gln) + L-glutamine + ATP + H2O = L-glutaminyl-tRNA(Gln) + L-glutamate + ADP + phosphate + H(+). The enzyme catalyses L-aspartyl-tRNA(Asn) + L-glutamine + ATP + H2O = L-asparaginyl-tRNA(Asn) + L-glutamate + ADP + phosphate + 2 H(+). In terms of biological role, allows the formation of correctly charged Asn-tRNA(Asn) or Gln-tRNA(Gln) through the transamidation of misacylated Asp-tRNA(Asn) or Glu-tRNA(Gln) in organisms which lack either or both of asparaginyl-tRNA or glutaminyl-tRNA synthetases. The reaction takes place in the presence of glutamine and ATP through an activated phospho-Asp-tRNA(Asn) or phospho-Glu-tRNA(Gln). The polypeptide is Aspartyl/glutamyl-tRNA(Asn/Gln) amidotransferase subunit B (Sulfurisphaera tokodaii (strain DSM 16993 / JCM 10545 / NBRC 100140 / 7) (Sulfolobus tokodaii)).